Here is a 106-residue protein sequence, read N- to C-terminus: Immunoglobulin lambda constant 2 (106 aa).

Residues 7–101 (PSVTLFPPSS…EGSTVEKTVA (95 aa)) enclose the Ig-like domain. Cysteine 28 and cysteine 87 form a disulfide bridge.

Immunoglobulins are composed of two identical heavy chains and two identical light chains; disulfide-linked.

It is found in the secreted. Its subcellular location is the cell membrane. In terms of biological role, constant region of immunoglobulin light chains. Immunoglobulins, also known as antibodies, are membrane-bound or secreted glycoproteins produced by B lymphocytes. In the recognition phase of humoral immunity, the membrane-bound immunoglobulins serve as receptors which, upon binding of a specific antigen, trigger the clonal expansion and differentiation of B lymphocytes into immunoglobulins-secreting plasma cells. Secreted immunoglobulins mediate the effector phase of humoral immunity, which results in the elimination of bound antigens. The antigen binding site is formed by the variable domain of one heavy chain, together with that of its associated light chain. Thus, each immunoglobulin has two antigen binding sites with remarkable affinity for a particular antigen. The variable domains are assembled by a process called V-(D)-J rearrangement and can then be subjected to somatic hypermutations which, after exposure to antigen and selection, allow affinity maturation for a particular antigen. The protein is Immunoglobulin lambda constant 2 of Homo sapiens (Human).